The chain runs to 217 residues: 3,4-dihydroxy-2-butanone 4-phosphate synthase (217 aa).

Residues 37 to 38 (RE), aspartate 42, 150 to 154 (RQGHT), and glutamate 174 each bind D-ribulose 5-phosphate. Residue glutamate 38 participates in Mg(2+) binding. Residue histidine 153 participates in Mg(2+) binding.

Belongs to the DHBP synthase family. As to quaternary structure, homodimer. The cofactor is Mg(2+). Mn(2+) serves as cofactor.

The enzyme catalyses D-ribulose 5-phosphate = (2S)-2-hydroxy-3-oxobutyl phosphate + formate + H(+). The protein operates within cofactor biosynthesis; riboflavin biosynthesis; 2-hydroxy-3-oxobutyl phosphate from D-ribulose 5-phosphate: step 1/1. Its function is as follows. Catalyzes the conversion of D-ribulose 5-phosphate to formate and 3,4-dihydroxy-2-butanone 4-phosphate. The protein is 3,4-dihydroxy-2-butanone 4-phosphate synthase of Desulforamulus reducens (strain ATCC BAA-1160 / DSM 100696 / MI-1) (Desulfotomaculum reducens).